The following is a 350-amino-acid chain: NADH-cytochrome b5 reductase 2 (350 aa).

Residues 43–63 (PLVLALGGVAGIGAWYGLGGF) traverse the membrane as a helical segment. In terms of domain architecture, FAD-binding FR-type spans 96–204 (DQFVEFTLKE…KGPIAKFAYK (109 aa)). 207 to 242 (EFESIGMIAGGSGITPMYQVIQDIASNPSDKTKVTL) contributes to the FAD binding site.

It belongs to the flavoprotein pyridine nucleotide cytochrome reductase family. It depends on FAD as a cofactor.

Its subcellular location is the mitochondrion outer membrane. The enzyme catalyses 2 Fe(III)-[cytochrome b5] + NADH = 2 Fe(II)-[cytochrome b5] + NAD(+) + H(+). In terms of biological role, may mediate the reduction of outer membrane cytochrome b5. This Mycosarcoma maydis (Corn smut fungus) protein is NADH-cytochrome b5 reductase 2 (MCR1).